The primary structure comprises 928 residues: Serine/threonine-protein kinase atg1 (928 aa).

The Protein kinase domain occupies 6-315 (YTRLDEIGRG…FPEFFENEVI (310 aa)). ATP-binding positions include 12-20 (IGRGSFATV) and Lys35. Residue Asp149 is the Proton acceptor of the active site. Disordered stretches follow at residues 318–470 (PIPG…EQER) and 544–571 (FSGR…PTSA). Residues 359–371 (TRREREVNREDVY) show a composition bias toward basic and acidic residues. The span at 437-452 (TTTAIERQRSRNTYSE) shows a compositional bias: polar residues. 2 stretches are compositionally biased toward basic and acidic residues: residues 459–470 (QPADKLKEEQER) and 548–564 (SRAD…ERRY).

This sequence belongs to the protein kinase superfamily. Ser/Thr protein kinase family. APG1/unc-51/ULK1 subfamily. As to quaternary structure, homodimer. Forms a ternary complex with ATG13 and ATG17.

The protein resides in the cytoplasm. It is found in the preautophagosomal structure membrane. It catalyses the reaction L-seryl-[protein] + ATP = O-phospho-L-seryl-[protein] + ADP + H(+). The enzyme catalyses L-threonyl-[protein] + ATP = O-phospho-L-threonyl-[protein] + ADP + H(+). Functionally, serine/threonine protein kinase involved in the cytoplasm to vacuole transport (Cvt) and found to be essential in autophagy, where it is required for the formation of autophagosomes. Involved in the clearance of protein aggregates which cannot be efficiently cleared by the proteasome. Required for selective autophagic degradation of the nucleus (nucleophagy) as well as for mitophagy which contributes to regulate mitochondrial quantity and quality by eliminating the mitochondria to a basal level to fulfill cellular energy requirements and preventing excess ROS production. Also involved in endoplasmic reticulum-specific autophagic process, in selective removal of ER-associated degradation (ERAD) substrates. Plays a key role in ATG9 and ATG23 cycling through the pre-autophagosomal structure and is necessary to promote ATG18 binding to ATG9 through phosphorylation of ATG9. Catalyzes phosphorylation of ATG4, decreasing the interaction between ATG4 and ATG8 and impairing deconjugation of PE-conjugated forms of ATG8. The protein is Serine/threonine-protein kinase atg1 of Aspergillus clavatus (strain ATCC 1007 / CBS 513.65 / DSM 816 / NCTC 3887 / NRRL 1 / QM 1276 / 107).